Here is a 445-residue protein sequence, read N- to C-terminus: 3-phosphoshikimate 1-carboxyvinyltransferase (445 aa).

Residues lysine 28, serine 29, and arginine 33 each contribute to the 3-phosphoshikimate site. Position 28 (lysine 28) interacts with phosphoenolpyruvate. Positions 101 and 129 each coordinate phosphoenolpyruvate. Residues serine 175, glutamine 177, aspartate 328, and lysine 355 each contribute to the 3-phosphoshikimate site. Position 177 (glutamine 177) interacts with phosphoenolpyruvate. Aspartate 328 acts as the Proton acceptor in catalysis. 2 residues coordinate phosphoenolpyruvate: arginine 359 and arginine 402.

It belongs to the EPSP synthase family. Monomer.

It is found in the cytoplasm. The enzyme catalyses 3-phosphoshikimate + phosphoenolpyruvate = 5-O-(1-carboxyvinyl)-3-phosphoshikimate + phosphate. It participates in metabolic intermediate biosynthesis; chorismate biosynthesis; chorismate from D-erythrose 4-phosphate and phosphoenolpyruvate: step 6/7. Catalyzes the transfer of the enolpyruvyl moiety of phosphoenolpyruvate (PEP) to the 5-hydroxyl of shikimate-3-phosphate (S3P) to produce enolpyruvyl shikimate-3-phosphate and inorganic phosphate. The sequence is that of 3-phosphoshikimate 1-carboxyvinyltransferase from Bradyrhizobium sp. (strain BTAi1 / ATCC BAA-1182).